The primary structure comprises 93 residues: Small ribosomal subunit protein uS19 (93 aa).

It belongs to the universal ribosomal protein uS19 family.

Protein S19 forms a complex with S13 that binds strongly to the 16S ribosomal RNA. This Citrifermentans bemidjiense (strain ATCC BAA-1014 / DSM 16622 / JCM 12645 / Bem) (Geobacter bemidjiensis) protein is Small ribosomal subunit protein uS19.